A 141-amino-acid polypeptide reads, in one-letter code: Large ribosomal subunit protein bL17 (141 aa).

The protein belongs to the bacterial ribosomal protein bL17 family. As to quaternary structure, part of the 50S ribosomal subunit. Contacts protein L32.

This Chlamydia trachomatis serovar D (strain ATCC VR-885 / DSM 19411 / UW-3/Cx) protein is Large ribosomal subunit protein bL17.